Consider the following 339-residue polypeptide: Glycerol-3-phosphate dehydrogenase [NAD(P)+] (339 aa).

S11, W12, and K109 together coordinate NADPH. 3 residues coordinate sn-glycerol 3-phosphate: K109, G140, and S142. NADPH is bound at residue A144. K195, D249, S259, R260, and N261 together coordinate sn-glycerol 3-phosphate. Residue K195 is the Proton acceptor of the active site. Residue R260 participates in NADPH binding. Residues V284 and E286 each contribute to the NADPH site.

This sequence belongs to the NAD-dependent glycerol-3-phosphate dehydrogenase family.

It is found in the cytoplasm. The catalysed reaction is sn-glycerol 3-phosphate + NAD(+) = dihydroxyacetone phosphate + NADH + H(+). It carries out the reaction sn-glycerol 3-phosphate + NADP(+) = dihydroxyacetone phosphate + NADPH + H(+). The protein operates within membrane lipid metabolism; glycerophospholipid metabolism. Catalyzes the reduction of the glycolytic intermediate dihydroxyacetone phosphate (DHAP) to sn-glycerol 3-phosphate (G3P), the key precursor for phospholipid synthesis. The polypeptide is Glycerol-3-phosphate dehydrogenase [NAD(P)+] (Lactobacillus helveticus (strain DPC 4571)).